The primary structure comprises 155 residues: Nuclear cap-binding protein subunit 2 (155 aa).

Residues tyrosine 19, tyrosine 42, 111–115 (RTDWD), 122–126 (RQYGR), and 132–133 (QV) contribute to the mRNA site. Positions 39-117 (ATLYVGNLSF…RIIRTDWDAG (79 aa)) constitute an RRM domain. Positions 121–155 (GRQYGRGKSGGQVRDEYRQDYDPARGGYGKMVQKS) are disordered. A compositionally biased stretch (basic and acidic residues) spans 133 to 143 (VRDEYRQDYDP).

This sequence belongs to the RRM NCBP2 family. In terms of assembly, component of the nuclear cap-binding complex (CBC), a heterodimer composed of ncbp1/cbp80 and ncbp2/cbp20 that interacts with m7GpppG-capped RNA.

The protein localises to the nucleus. It is found in the cytoplasm. Its function is as follows. Component of the cap-binding complex (CBC), which binds co-transcriptionally to the 5' cap of pre-mRNAs and is involved in various processes such as pre-mRNA splicing, translation regulation, nonsense-mediated mRNA decay, RNA-mediated gene silencing (RNAi) by microRNAs (miRNAs) and mRNA export. The CBC complex is involved in mRNA export from the nucleus, leading to the recruitment of the mRNA export machinery to the 5' end of mRNA and to mRNA export in a 5' to 3' direction through the nuclear pore. The CBC complex is also involved in mediating U snRNA and intronless mRNAs export from the nucleus. The CBC complex is essential for a pioneer round of mRNA translation, before steady state translation when the CBC complex is replaced by cytoplasmic cap-binding protein eIF4E. The pioneer round of mRNA translation mediated by the CBC complex plays a central role in nonsense-mediated mRNA decay (NMD), NMD only taking place in mRNAs bound to the CBC complex, but not on eIF4E-bound mRNAs. The CBC complex enhances NMD in mRNAs containing at least one exon-junction complex (EJC), promoting the interaction between upf1 and upf2. The CBC complex is also involved in 'failsafe' NMD, which is independent of the EJC complex, while it does not participate in Staufen-mediated mRNA decay (SMD). During cell proliferation, the CBC complex is also involved in microRNAs (miRNAs) biogenesis via its interaction with srrt/ars2, thereby being required for miRNA-mediated RNA interference. The CBC complex also acts as a negative regulator of parn, thereby acting as an inhibitor of mRNA deadenylation. In the CBC complex, ncbp2/cbp20 recognizes and binds capped RNAs (m7GpppG-capped RNA) but requires ncbp1/cbp80 to stabilize the movement of its N-terminal loop and lock the CBC into a high affinity cap-binding state with the cap structure. The conventional cap-binding complex with NCBP2 binds both small nuclear RNA (snRNA) and messenger (mRNA) and is involved in their export from the nucleus. In Danio rerio (Zebrafish), this protein is Nuclear cap-binding protein subunit 2 (ncbp2).